Consider the following 395-residue polypeptide: ADP-ribosylation factor-like protein 13A (395 aa).

GTP-binding positions include 28-35 (GLDNSGKS), 71-75 (DLTGD), and 130-133 (NKQD).

This sequence belongs to the small GTPase superfamily. Arf family.

This chain is ADP-ribosylation factor-like protein 13A (Arl13a), found in Rattus norvegicus (Rat).